Here is a 487-residue protein sequence, read N- to C-terminus: Acetyl-coenzyme A carboxylase carboxyl transferase subunit beta, chloroplastic (487 aa).

The tract at residues 180–201 (SRNSSENEGSSKRTRTKGSDLT) is disordered. The 270-residue stretch at 218 to 487 (LWVQCENCYG…PLNQKSSKIK (270 aa)) folds into the CoA carboxyltransferase N-terminal domain. Residues C222, C225, C241, and C244 each contribute to the Zn(2+) site. Residues 222 to 244 (CENCYGLNYKKFLKSKMNICEQC) form a C4-type zinc finger.

The protein belongs to the AccD/PCCB family. In terms of assembly, acetyl-CoA carboxylase is a heterohexamer composed of biotin carboxyl carrier protein, biotin carboxylase and 2 subunits each of ACCase subunit alpha and ACCase plastid-coded subunit beta (accD). It depends on Zn(2+) as a cofactor.

The protein resides in the plastid. It localises to the chloroplast stroma. The enzyme catalyses N(6)-carboxybiotinyl-L-lysyl-[protein] + acetyl-CoA = N(6)-biotinyl-L-lysyl-[protein] + malonyl-CoA. It participates in lipid metabolism; malonyl-CoA biosynthesis; malonyl-CoA from acetyl-CoA: step 1/1. Its function is as follows. Component of the acetyl coenzyme A carboxylase (ACC) complex. Biotin carboxylase (BC) catalyzes the carboxylation of biotin on its carrier protein (BCCP) and then the CO(2) group is transferred by the transcarboxylase to acetyl-CoA to form malonyl-CoA. The polypeptide is Acetyl-coenzyme A carboxylase carboxyl transferase subunit beta, chloroplastic (Atropa belladonna (Belladonna)).